We begin with the raw amino-acid sequence, 411 residues long: Anaerobic sulfatase-maturating enzyme homolog AslB (411 aa).

The Radical SAM core domain occupies 3–250 (QQVPTRAFHV…LVAIFDHWIK (248 aa)). Residues Cys21 and Cys25 each coordinate [4Fe-4S] cluster. Residue Tyr27 coordinates S-adenosyl-L-methionine. Cys28 provides a ligand contact to [4Fe-4S] cluster. S-adenosyl-L-methionine is bound by residues Gly74, Ser129, and Arg141. [4Fe-4S] cluster contacts are provided by Cys276, Cys282, and Cys297. The Proton acceptor role is filled by Asp298. 5 residues coordinate [4Fe-4S] cluster: Cys339, Cys342, Cys348, Cys352, and Cys371.

It belongs to the radical SAM superfamily. Anaerobic sulfatase-maturating enzyme family. The cofactor is [4Fe-4S] cluster.

This Escherichia coli (strain K12) protein is Anaerobic sulfatase-maturating enzyme homolog AslB (aslB).